Consider the following 278-residue polypeptide: Protoheme IX farnesyltransferase (278 aa).

9 consecutive transmembrane segments (helical) span residues 12–32 (VIWL…QTVD), 33–53 (WSKL…SAAF), 83–103 (ALVY…YLLG), 105–125 (LPGL…TIWL), 130–150 (WLNI…GYAL), 157–177 (LPAV…IWAL), 204–224 (VIIS…YLAF), 228–248 (LLGL…SILA), and 257–277 (MWKM…ALVF).

The protein belongs to the UbiA prenyltransferase family. Protoheme IX farnesyltransferase subfamily.

The protein resides in the cell membrane. It carries out the reaction heme b + (2E,6E)-farnesyl diphosphate + H2O = Fe(II)-heme o + diphosphate. It functions in the pathway porphyrin-containing compound metabolism; heme O biosynthesis; heme O from protoheme: step 1/1. Converts heme B (protoheme IX) to heme O by substitution of the vinyl group on carbon 2 of heme B porphyrin ring with a hydroxyethyl farnesyl side group. In Pyrobaculum islandicum (strain DSM 4184 / JCM 9189 / GEO3), this protein is Protoheme IX farnesyltransferase.